Here is a 370-residue protein sequence, read N- to C-terminus: N-acetyldiaminopimelate deacetylase (370 aa).

Asp-67 is a catalytic residue. Glu-126 functions as the Proton acceptor in the catalytic mechanism.

The protein belongs to the peptidase M20A family. N-acetyldiaminopimelate deacetylase subfamily.

It catalyses the reaction N-acetyl-(2S,6S)-2,6-diaminopimelate + H2O = (2S,6S)-2,6-diaminopimelate + acetate. It participates in amino-acid biosynthesis; L-lysine biosynthesis via DAP pathway; LL-2,6-diaminopimelate from (S)-tetrahydrodipicolinate (acetylase route): step 3/3. Functionally, catalyzes the conversion of N-acetyl-diaminopimelate to diaminopimelate and acetate. The protein is N-acetyldiaminopimelate deacetylase of Exiguobacterium sibiricum (strain DSM 17290 / CCUG 55495 / CIP 109462 / JCM 13490 / 255-15).